Here is a 306-residue protein sequence, read N- to C-terminus: Homoserine kinase (306 aa).

91 to 101 (PLARGLGSSAA) contacts ATP.

It belongs to the GHMP kinase family. Homoserine kinase subfamily.

Its subcellular location is the cytoplasm. The enzyme catalyses L-homoserine + ATP = O-phospho-L-homoserine + ADP + H(+). It functions in the pathway amino-acid biosynthesis; L-threonine biosynthesis; L-threonine from L-aspartate: step 4/5. Functionally, catalyzes the ATP-dependent phosphorylation of L-homoserine to L-homoserine phosphate. The polypeptide is Homoserine kinase (Bacillus licheniformis (strain ATCC 14580 / DSM 13 / JCM 2505 / CCUG 7422 / NBRC 12200 / NCIMB 9375 / NCTC 10341 / NRRL NRS-1264 / Gibson 46)).